A 103-amino-acid chain; its full sequence is Large ribosomal subunit protein bL21 (103 aa).

The protein belongs to the bacterial ribosomal protein bL21 family. In terms of assembly, part of the 50S ribosomal subunit. Contacts protein L20.

In terms of biological role, this protein binds to 23S rRNA in the presence of protein L20. The polypeptide is Large ribosomal subunit protein bL21 (Aliivibrio salmonicida (strain LFI1238) (Vibrio salmonicida (strain LFI1238))).